A 486-amino-acid polypeptide reads, in one-letter code: Arrestin-related trafficking adapter 10 (486 aa).

It belongs to the ART10 family.

The protein resides in the cytoplasm. Functionally, may regulate endocytosis by recruiting RSP5 ubiquitin ligase activity to specific plasma membrane proteins in response to extracellular stimuli. This Zygosaccharomyces rouxii (strain ATCC 2623 / CBS 732 / NBRC 1130 / NCYC 568 / NRRL Y-229) protein is Arrestin-related trafficking adapter 10 (ART10).